The sequence spans 335 residues: UDP-N-acetylenolpyruvoylglucosamine reductase 1 (335 aa).

In terms of domain architecture, FAD-binding PCMH-type spans 36 to 202 (RIGGPAAVFA…LEVELLLKPG (167 aa)). Residue R181 is part of the active site. S231 functions as the Proton donor in the catalytic mechanism. E306 is a catalytic residue.

The protein belongs to the MurB family. FAD is required as a cofactor.

Its subcellular location is the cytoplasm. It catalyses the reaction UDP-N-acetyl-alpha-D-muramate + NADP(+) = UDP-N-acetyl-3-O-(1-carboxyvinyl)-alpha-D-glucosamine + NADPH + H(+). It participates in cell wall biogenesis; peptidoglycan biosynthesis. In terms of biological role, cell wall formation. The chain is UDP-N-acetylenolpyruvoylglucosamine reductase 1 (murB1) from Corynebacterium glutamicum (strain ATCC 13032 / DSM 20300 / JCM 1318 / BCRC 11384 / CCUG 27702 / LMG 3730 / NBRC 12168 / NCIMB 10025 / NRRL B-2784 / 534).